The sequence spans 305 residues: MLDTSIQELINKWQQYLILQKNYSHHTVVSYNNDLKHFLEFMHYYNSDLVTINHIKTADIRLIRSWLAKRNCNNFTTSSISRGLSAVKNFYKFLEKTTQLNSHIIFSIKSPKKTKLLPKSLSEDDVVISLKHIEEYGNVKWVELRNKALLVLIYATGLRISEALSITKLHLQNLEFIRIIGKGSKERIIPWLPIVKNLITQYLEILPYKLGENEPIFRGKQGKKLQPTVFNRELIKLKRFYGLPEHLTAHSFRHSFASHLLEHGADLRSIQELLGHKSLSTTQNYTKTSIKHLVSVYTSAYPIKK.

In terms of domain architecture, Core-binding (CB) spans 4 to 95; that stretch reads TSIQELINKW…AVKNFYKFLE (92 aa). The Tyr recombinase domain occupies 116–298; it reads LLPKSLSEDD…SIKHLVSVYT (183 aa). Residues Arg159, Lys182, His250, Arg253, and His276 contribute to the active site. Tyr285 serves as the catalytic O-(3'-phospho-DNA)-tyrosine intermediate.

The protein belongs to the 'phage' integrase family. XerC subfamily. As to quaternary structure, forms a cyclic heterotetrameric complex composed of two molecules of XerC and two molecules of XerD.

The protein localises to the cytoplasm. In terms of biological role, site-specific tyrosine recombinase, which acts by catalyzing the cutting and rejoining of the recombining DNA molecules. The XerC-XerD complex is essential to convert dimers of the bacterial chromosome into monomers to permit their segregation at cell division. It also contributes to the segregational stability of plasmids. In Rickettsia canadensis (strain McKiel), this protein is Tyrosine recombinase XerC.